The primary structure comprises 878 residues: Probable di- and tripeptidase DUG2 (878 aa).

WD repeat units lie at residues 18–57 (NHAF…LIHT), 68–107 (HTRS…IRDD), 235–274 (RFNQ…GQNT), 282–322 (DKID…IIST), and 362–405 (PQQG…SAVP). H520 contributes to the Zn(2+) binding site. D522 is an active-site residue. D553 lines the Zn(2+) pocket. E586 functions as the Proton acceptor in the catalytic mechanism. Residue E587 coordinates Zn(2+). The stretch at 608–651 (IDWILLSNSTWVDQEHPCLNYGLRGVINAQIKVWSDKPDGHSGL) is one WD 6 repeat. H853 serves as a coordination point for Zn(2+).

The protein belongs to the peptidase M20A family. In terms of assembly, component of the GSH degradosomal complex composed of at least DUG1, DUG2 and DUG3. Zn(2+) is required as a cofactor.

The protein resides in the cytoplasm. It is found in the nucleus. Functionally, component of the GSH degradosomal complex involved in the degradation of glutathione (GSH) and other peptides containing a gamma-glu-X bond. This chain is Probable di- and tripeptidase DUG2 (DUG2), found in Saccharomyces cerevisiae (strain ATCC 204508 / S288c) (Baker's yeast).